A 143-amino-acid chain; its full sequence is Hemoglobin subunit alpha (143 aa).

The Globin domain maps to Thr-2 to Arg-143. Position 60 (His-60) interacts with O2. Residue His-89 participates in heme b binding.

The protein belongs to the globin family. Heterotetramer of two alpha chains and two beta chains. Red blood cells.

Functionally, involved in oxygen transport from gills to the various peripheral tissues. This Thunnus thynnus (Atlantic bluefin tuna) protein is Hemoglobin subunit alpha (hba).